The primary structure comprises 400 residues: Acetate kinase (400 aa).

Asn10 contacts Mg(2+). Lys17 contacts ATP. Arg91 serves as a coordination point for substrate. Catalysis depends on Asp150, which acts as the Proton donor/acceptor. Residues 210–214 (HLGNG), 285–287 (DCR), and 333–337 (GIGEN) each bind ATP. Glu387 is a Mg(2+) binding site.

This sequence belongs to the acetokinase family. Homodimer. Mg(2+) is required as a cofactor. The cofactor is Mn(2+).

Its subcellular location is the cytoplasm. The enzyme catalyses acetate + ATP = acetyl phosphate + ADP. The protein operates within metabolic intermediate biosynthesis; acetyl-CoA biosynthesis; acetyl-CoA from acetate: step 1/2. In terms of biological role, catalyzes the formation of acetyl phosphate from acetate and ATP. Can also catalyze the reverse reaction. The chain is Acetate kinase from Serratia proteamaculans (strain 568).